We begin with the raw amino-acid sequence, 280 residues long: Bifunctional protein FolD (280 aa).

NADP(+)-binding positions include 166-168 (GRS) and Ser-191.

The protein belongs to the tetrahydrofolate dehydrogenase/cyclohydrolase family. Homodimer.

It carries out the reaction (6R)-5,10-methylene-5,6,7,8-tetrahydrofolate + NADP(+) = (6R)-5,10-methenyltetrahydrofolate + NADPH. The catalysed reaction is (6R)-5,10-methenyltetrahydrofolate + H2O = (6R)-10-formyltetrahydrofolate + H(+). Its pathway is one-carbon metabolism; tetrahydrofolate interconversion. Its function is as follows. Catalyzes the oxidation of 5,10-methylenetetrahydrofolate to 5,10-methenyltetrahydrofolate and then the hydrolysis of 5,10-methenyltetrahydrofolate to 10-formyltetrahydrofolate. This Marinomonas sp. (strain MWYL1) protein is Bifunctional protein FolD.